Reading from the N-terminus, the 706-residue chain is Polyribonucleotide nucleotidyltransferase (706 aa).

The Mg(2+) site is built by Asp-483 and Asp-489. One can recognise a KH domain in the interval Pro-550–Ile-609. One can recognise an S1 motif domain in the interval Gly-619–Lys-687.

This sequence belongs to the polyribonucleotide nucleotidyltransferase family. The cofactor is Mg(2+).

It is found in the cytoplasm. It carries out the reaction RNA(n+1) + phosphate = RNA(n) + a ribonucleoside 5'-diphosphate. Involved in mRNA degradation. Catalyzes the phosphorolysis of single-stranded polyribonucleotides processively in the 3'- to 5'-direction. This Pelobacter propionicus (strain DSM 2379 / NBRC 103807 / OttBd1) protein is Polyribonucleotide nucleotidyltransferase.